We begin with the raw amino-acid sequence, 326 residues long: Malate dehydrogenase (326 aa).

Residue 11 to 17 (GAAGQIG) coordinates NAD(+). The substrate site is built by R92 and R98. NAD(+)-binding positions include N105, Q112, and 129 to 131 (VGN). Residues N131 and R162 each coordinate substrate. The Proton acceptor role is filled by H187.

The protein belongs to the LDH/MDH superfamily. MDH type 2 family.

It catalyses the reaction (S)-malate + NAD(+) = oxaloacetate + NADH + H(+). In terms of biological role, catalyzes the reversible oxidation of malate to oxaloacetate. The protein is Malate dehydrogenase of Leptospira interrogans serogroup Icterohaemorrhagiae serovar Lai (strain 56601).